The chain runs to 396 residues: Elongation factor Tu (396 aa).

The tr-type G domain occupies 10-206 (KPHVNVGTIG…TMDSYIPEPV (197 aa)). The G1 stretch occupies residues 19 to 26 (GHVDHGKT). 19-26 (GHVDHGKT) lines the GTP pocket. Threonine 26 lines the Mg(2+) pocket. The tract at residues 60-64 (GITIS) is G2. The G3 stretch occupies residues 81 to 84 (DCPG). GTP-binding positions include 81-85 (DCPGH) and 136-139 (NKAD). The G4 stretch occupies residues 136–139 (NKAD). Residues 174–176 (SAL) are G5.

This sequence belongs to the TRAFAC class translation factor GTPase superfamily. Classic translation factor GTPase family. EF-Tu/EF-1A subfamily. Monomer.

Its subcellular location is the cytoplasm. The enzyme catalyses GTP + H2O = GDP + phosphate + H(+). Its function is as follows. GTP hydrolase that promotes the GTP-dependent binding of aminoacyl-tRNA to the A-site of ribosomes during protein biosynthesis. This is Elongation factor Tu from Legionella pneumophila (strain Lens).